The following is a 239-amino-acid chain: 7-cyano-7-deazaguanine synthase (239 aa).

Residue phenylalanine 8–leucine 18 participates in ATP binding. Zn(2+) contacts are provided by cysteine 194, cysteine 209, cysteine 212, and cysteine 215.

Belongs to the QueC family.

It carries out the reaction 7-carboxy-7-deazaguanine + NH4(+) + ATP = 7-cyano-7-deazaguanine + ADP + phosphate + H2O + H(+). It functions in the pathway purine metabolism; 7-cyano-7-deazaguanine biosynthesis. Catalyzes the ATP-dependent conversion of 7-carboxy-7-deazaguanine (CDG) to 7-cyano-7-deazaguanine (preQ(0)). The sequence is that of 7-cyano-7-deazaguanine synthase from Pyrococcus abyssi (strain GE5 / Orsay).